An 839-amino-acid polypeptide reads, in one-letter code: Taste receptor type 1 member 2 (839 aa).

The first 19 residues, 1 to 19, serve as a signal peptide directing secretion; the sequence is MRPRATTICSLFFLLRVLA. At 20 to 566 the chain is on the extracellular side; it reads EPAKNSDFYL…AFLEWHEAPT (547 aa). N-linked (GlcNAc...) asparagine glycans are attached at residues Asn84, Asn127, Asn248, Asn292, Asn312, Asn368, Asn428, Asn487, and Asn527. Residues 567 to 587 traverse the membrane as a helical segment; sequence IVVALLAALGFLSTLAILVIF. The Cytoplasmic portion of the chain corresponds to 588-602; it reads WRHFQTPMVRSAGGP. The chain crosses the membrane as a helical span at residues 603-623; that stretch reads MCFLMLTLLLVAYMVVPVYVG. The Extracellular segment spans residues 624–635; the sequence is PPKVSTCFCRQA. Residues 636–656 form a helical membrane-spanning segment; it reads LFPLCFTICISCIAVRSFQIV. Topologically, residues 657–681 are cytoplasmic; the sequence is CVFKMASRFPRAYSYWVRYQGPYVS. The helical transmembrane segment at 682 to 702 threads the bilayer; the sequence is MAFITVLKMVTVVIGMLATGL. At 703-727 the chain is on the extracellular side; that stretch reads NPTTRIDPDDPKIMIVSCNPNYRNS. The helical transmembrane segment at 728 to 748 threads the bilayer; it reads LFFNTGLDLLLSVVGFSFAYM. The Cytoplasmic portion of the chain corresponds to 749-760; the sequence is GKELPTNYNEAK. The chain crosses the membrane as a helical span at residues 761-781; that stretch reads FITLSMTFYFTSSVSLCTFMS. Residues 782–784 lie on the Extracellular side of the membrane; it reads AYN. The helical transmembrane segment at 785–805 threads the bilayer; sequence GVLVTIMDLLVTVLNLLAISL. At 806–839 the chain is on the cytoplasmic side; it reads GYFGPKCYMILFYPERNTPAYFNSMIQGYTMRRD.

Belongs to the G-protein coupled receptor 3 family. TAS1R subfamily. In terms of assembly, forms heterodimers with TAS1R3.

The protein localises to the cell membrane. In terms of biological role, putative taste receptor. TAS1R2/TAS1R3 recognizes diverse natural and synthetic sweeteners. The chain is Taste receptor type 1 member 2 (TAS1R2) from Papio hamadryas (Hamadryas baboon).